We begin with the raw amino-acid sequence, 571 residues long: Cytoplasmic polyadenylation element-binding protein 2 (571 aa).

2 disordered regions span residues 1 to 23 (MSKSRRLFLSMQGDDDFWGNGDR) and 51 to 75 (FKQNKLGRQQSESRHENEENKVSQE). Residues 61 to 75 (SESRHENEENKVSQE) show a composition bias toward basic and acidic residues. Residues 435 to 517 (LVAFIGGVPR…KRVEIKPYFF (83 aa)) enclose the RRM domain.

In terms of biological role, cytoplasmic polyadenylation element binding protein that binds to and regulates the translation of specific mRNAs. The polypeptide is Cytoplasmic polyadenylation element-binding protein 2 (cpb-2) (Caenorhabditis remanei (Caenorhabditis vulgaris)).